Reading from the N-terminus, the 187-residue chain is MANQLQVPKQKLAKPPLAIHTLGDRVLRQGSKQISGINDEVRKLAQQMLQTMYSADGIGLAAPQVGVNKRMIVVDIDPENAARPPLVLINPLIKQFSSDLAVDQEGCLSVPSIYADVRRPERVVATYRDLNGRPVTLEATGLLARCIQHEIDHLDGVLFVDRVENQIALAPQLVEKGFAVRDVQVRA.

Positions 107 and 149 each coordinate Fe cation. Residue glutamate 150 is part of the active site. Residue histidine 153 participates in Fe cation binding.

It belongs to the polypeptide deformylase family. The cofactor is Fe(2+).

It carries out the reaction N-terminal N-formyl-L-methionyl-[peptide] + H2O = N-terminal L-methionyl-[peptide] + formate. In terms of biological role, removes the formyl group from the N-terminal Met of newly synthesized proteins. Requires at least a dipeptide for an efficient rate of reaction. N-terminal L-methionine is a prerequisite for activity but the enzyme has broad specificity at other positions. This is Peptide deformylase 2 from Gloeobacter violaceus (strain ATCC 29082 / PCC 7421).